Reading from the N-terminus, the 322-residue chain is Homoserine kinase (322 aa).

Position 107 to 117 (107 to 117 (PLSSGMGGSAA)) interacts with ATP.

It belongs to the GHMP kinase family. Homoserine kinase subfamily.

It localises to the cytoplasm. It carries out the reaction L-homoserine + ATP = O-phospho-L-homoserine + ADP + H(+). Its pathway is amino-acid biosynthesis; L-threonine biosynthesis; L-threonine from L-aspartate: step 4/5. Catalyzes the ATP-dependent phosphorylation of L-homoserine to L-homoserine phosphate. The protein is Homoserine kinase of Xylella fastidiosa (strain 9a5c).